A 313-amino-acid polypeptide reads, in one-letter code: tRNA dimethylallyltransferase (313 aa).

Residue 10 to 17 (GPTASGKT) coordinates ATP. 12–17 (TASGKT) contacts substrate. Interaction with substrate tRNA stretches follow at residues 35-38 (DSAM), 159-163 (QRIQR), and 240-245 (RCVGYR).

Belongs to the IPP transferase family. As to quaternary structure, monomer. It depends on Mg(2+) as a cofactor.

The enzyme catalyses adenosine(37) in tRNA + dimethylallyl diphosphate = N(6)-dimethylallyladenosine(37) in tRNA + diphosphate. In terms of biological role, catalyzes the transfer of a dimethylallyl group onto the adenine at position 37 in tRNAs that read codons beginning with uridine, leading to the formation of N6-(dimethylallyl)adenosine (i(6)A). This chain is tRNA dimethylallyltransferase, found in Legionella pneumophila subsp. pneumophila (strain Philadelphia 1 / ATCC 33152 / DSM 7513).